The primary structure comprises 198 residues: Ribonuclease HII (198 aa).

An RNase H type-2 domain is found at 10–198 (QLVAGVDEVG…PVKRALGLAS (189 aa)). 3 residues coordinate a divalent metal cation: D16, E17, and D108.

Belongs to the RNase HII family. Requires Mn(2+) as cofactor. Mg(2+) is required as a cofactor.

It localises to the cytoplasm. The catalysed reaction is Endonucleolytic cleavage to 5'-phosphomonoester.. Functionally, endonuclease that specifically degrades the RNA of RNA-DNA hybrids. The chain is Ribonuclease HII from Shigella boydii serotype 18 (strain CDC 3083-94 / BS512).